Here is an 89-residue protein sequence, read N- to C-terminus: DNA-directed RNA polymerase subunit omega (89 aa).

The protein belongs to the RNA polymerase subunit omega family. As to quaternary structure, the RNAP catalytic core consists of 2 alpha, 1 beta, 1 beta' and 1 omega subunit. When a sigma factor is associated with the core the holoenzyme is formed, which can initiate transcription.

It carries out the reaction RNA(n) + a ribonucleoside 5'-triphosphate = RNA(n+1) + diphosphate. In terms of biological role, promotes RNA polymerase assembly. Latches the N- and C-terminal regions of the beta' subunit thereby facilitating its interaction with the beta and alpha subunits. In Clavibacter michiganensis subsp. michiganensis (strain NCPPB 382), this protein is DNA-directed RNA polymerase subunit omega.